A 113-amino-acid chain; its full sequence is MSNPELPIKFTDSAASKVLSLITEEENPALKLRVYVTGGGCSGFQYGFTFDEKVNDGDMTIEKQGVMMVIDPMSLQYLVDGEVDYLESLEGSRFVVNNPNATTTCGCGSSFSI.

Residues Cys41, Cys105, and Cys107 each coordinate iron-sulfur cluster.

Belongs to the HesB/IscA family. Homodimer. Requires iron-sulfur cluster as cofactor.

Required for insertion of 4Fe-4S clusters for at least IspG. The sequence is that of Iron-sulfur cluster insertion protein ErpA from Colwellia psychrerythraea (strain 34H / ATCC BAA-681) (Vibrio psychroerythus).